We begin with the raw amino-acid sequence, 434 residues long: Asparagine--tRNA ligase (434 aa).

Belongs to the class-II aminoacyl-tRNA synthetase family.

It is found in the cytoplasm. It catalyses the reaction tRNA(Asn) + L-asparagine + ATP = L-asparaginyl-tRNA(Asn) + AMP + diphosphate + H(+). This chain is Asparagine--tRNA ligase, found in Pyrococcus abyssi (strain GE5 / Orsay).